We begin with the raw amino-acid sequence, 735 residues long: uncharacterized protein (735 aa).

The GAF domain maps to 25-175 (DLSCLSPDLL…CIAAVLAGLL (151 aa)). One can recognise a PAS domain in the interval 185–255 (SEAARRAMLD…RQGFMRHLAT (71 aa)). Residues 263-313 (RLVEVEALRADGSVFPAELTVNEHRAGGRRLFSAFVRDISDRITSRRALER) enclose the PAC domain. One can recognise a GGDEF domain in the interval 342–464 (GAVVLMLRDL…DGHLLHFAEH (123 aa)). Positions 472 to 732 (RLELEMALRD…VAGTLPETLA (261 aa)) constitute an EAL domain.

This is an uncharacterized protein from Azorhizobium caulinodans (strain ATCC 43989 / DSM 5975 / JCM 20966 / LMG 6465 / NBRC 14845 / NCIMB 13405 / ORS 571).